We begin with the raw amino-acid sequence, 112 residues long: Protein FAM32A (112 aa).

The interval 23–56 (TKRKKKKKDKDKAKMLEAMGTSKKNEEEKRRCLD) is disordered. A compositionally biased stretch (basic and acidic residues) spans 45–56 (KKNEEEKRRCLD).

Belongs to the FAM32 family.

The protein localises to the nucleus. In terms of biological role, may induce G2 arrest and apoptosis. May also increase cell sensitivity to apoptotic stimuli. The sequence is that of Protein FAM32A (Fam32a) from Rattus norvegicus (Rat).